Consider the following 1001-residue polypeptide: Copper-transporting ATPase RAN1 (1001 aa).

The segment at M1–I21 is disordered. The Cytoplasmic portion of the chain corresponds to M1–R298. A compositionally biased stretch (polar residues) spans T11–I21. HMA domains lie at R56–E122 and L133–S199. Residues C67, C70, C144, and C147 each coordinate Cu(+). Positions D207 to F273 constitute an HMA 3; degenerate domain. The helical transmembrane segment at F299 to A320 threads the bilayer. The Extracellular segment spans residues L321–W338. The chain crosses the membrane as a helical span at residues L339–A358. Topologically, residues A359–N365 are cytoplasmic. Residues G366 to V386 form a helical membrane-spanning segment. At G387–F403 the chain is on the extracellular side. The chain crosses the membrane as a helical span at residues D404–K424. Topologically, residues G425 to Y558 are cytoplasmic. Residues V559–G581 traverse the membrane as a helical segment. The Extracellular portion of the chain corresponds to G582 to S602. The chain crosses the membrane as a helical span at residues L603–L620. At A621–I931 the chain is on the cytoplasmic side. Residue D658 is the 4-aspartylphosphate intermediate of the active site. Mg(2+) is bound by residues D877 and D881. The chain crosses the membrane as a helical span at residues R932–G951. The Extracellular portion of the chain corresponds to V952 to P963. Residues W964–L982 traverse the membrane as a helical segment. Over L983 to E1001 the chain is Cytoplasmic.

It belongs to the cation transport ATPase (P-type) (TC 3.A.3) family. Type IB subfamily.

The protein localises to the membrane. It catalyses the reaction Cu(+)(in) + ATP + H2O = Cu(+)(out) + ADP + phosphate + H(+). Its function is as follows. Involved in copper import into the cell. Essential for ethylene signaling, which requires copper. Acts by delivering copper to create functional hormone receptors. This Arabidopsis thaliana (Mouse-ear cress) protein is Copper-transporting ATPase RAN1 (RAN1).